We begin with the raw amino-acid sequence, 245 residues long: MGVPFDYAPERPEHIDAILNGLDRYNPETTNIFQEYVTLQCEEKTYDCYANLALLKLYQFNPHLTKDETITNILVKSLTVFPSPDFSLALHLLPPHILTPISSSSALPAAGDAPLSEAVQKLAVLNTLLSSANYSQFWSTLDSDDLYADLIADVSGFEELIRIRIASTISQSVREIPSSELENWLGMNGEAFEKFIKEVCGWTIENGSVIVPLNKENEAKGTVVRENVKMEQFSRVIRRAYEQPA.

One can recognise a PCI domain in the interval 46–227 (YDCYANLALL…EAKGTVVREN (182 aa)).

It belongs to the eIF-3 subunit K family. In terms of assembly, component of the eukaryotic translation initiation factor 3 (eIF-3) complex.

The protein localises to the cytoplasm. Component of the eukaryotic translation initiation factor 3 (eIF-3) complex, which is involved in protein synthesis of a specialized repertoire of mRNAs and, together with other initiation factors, stimulates binding of mRNA and methionyl-tRNAi to the 40S ribosome. The eIF-3 complex specifically targets and initiates translation of a subset of mRNAs involved in cell proliferation. This Sclerotinia sclerotiorum (strain ATCC 18683 / 1980 / Ss-1) (White mold) protein is Eukaryotic translation initiation factor 3 subunit K.